Reading from the N-terminus, the 147-residue chain is Protein SprT-like (147 aa).

Positions 9 to 142 constitute a SprT-like domain; sequence AKVKEISLTY…CGKCRGKLIL (134 aa). His-65 is a Zn(2+) binding site. The active site involves Glu-66. His-69 contacts Zn(2+).

Belongs to the SprT family. Zn(2+) serves as cofactor.

Its subcellular location is the cytoplasm. The polypeptide is Protein SprT-like (yciD) (Lactococcus lactis subsp. lactis (strain IL1403) (Streptococcus lactis)).